Consider the following 165-residue polypeptide: Cyanate hydratase (165 aa).

Positions 1–20 are disordered; the sequence is MAQNKANTVSQLQSLKNKSG. Active-site residues include arginine 90, glutamate 93, and serine 116.

This sequence belongs to the cyanase family.

It carries out the reaction cyanate + hydrogencarbonate + 3 H(+) = NH4(+) + 2 CO2. In terms of biological role, catalyzes the reaction of cyanate with bicarbonate to produce ammonia and carbon dioxide. This chain is Cyanate hydratase, found in Medicago truncatula (Barrel medic).